The primary structure comprises 393 residues: uncharacterized protein (393 aa).

Disordered regions lie at residues 77-118 and 259-296; these read DSNN…SIRP and INNNNNNNNNNSNNNNNNNNSNNNDNNNNINTKVDESN. Positions 79–92 are enriched in low complexity; that stretch reads NNNNNNNNNNNNNN. Residues 103-114 show a composition bias toward polar residues; sequence IRQSLSSPQQLV. The span at 259–289 shows a compositional bias: low complexity; sequence INNNNNNNNNNSNNNNNNNNSNNNDNNNNIN.

This is an uncharacterized protein from Dictyostelium discoideum (Social amoeba).